The primary structure comprises 1110 residues: Nonribisomal peptide synthetase benY (1110 aa).

Residues 47 to 443 (RALEFPEKIA…GRKDHQLKVR (397 aa)) form an adenylation region. Residues 575–651 (TLETESEKIL…EMAQSARVVP (77 aa)) form the Carrier domain. Position 612 is an O-(pantetheine 4'-phosphoryl)serine (S612). Residues 713-1025 (YILDGDVDFD…IFHHQNIDTK (313 aa)) form a condensation region.

Belongs to the NRP synthetase family.

Its pathway is secondary metabolite biosynthesis. In terms of biological role, nonribisomal peptide synthetase; part of the gene cluster that mediates the biosynthesis of benzomalvin A and D. The pathway begins with the loading of amino acid precursors onto the A domains of the non ribosomal peptide synthetases benY and benZ. BenY and the A1 domain of benZ are loaded with anthranilate (Anth), while the A2 domain of benZ is loaded with phenylalanine (Phe). N-methylation of Phe by the methyltransferase benX may happen before loading of Phe onto benZ, after loading of Phe, or after dipeptide formation. Condensation of Anth with the secondary amine of NmPhe or Phe is catalyzed by the C1 domain of benZ, forming a dipeptide intermediate. This is followed by in trans condensation of the Anth-NmPhe dipeptide with Anth bound to the T domain of benY by the C2 domain of benZ to form the linear tripeptide Anth-NmPhe-Anth. Cyclization and release of the tripeptide is then catalyzed by the C-terminal C domain of benY and the resulting 11-member macrocyclic intermediate is expected to spontaneously collapse to form the benzodiazepine core. Benzomalvin A is in conformational equilibrium with its atropisomer, benzomalvin D. This is Nonribisomal peptide synthetase benY from Aspergillus terreus.